The following is a 403-amino-acid chain: Argininosuccinate synthase (403 aa).

Residues 10–18 and alanine 38 each bind ATP; that span reads AYSGGVDTS. Tyrosine 89 provides a ligand contact to L-citrulline. Glycine 119 contributes to the ATP binding site. L-aspartate is bound by residues threonine 121, asparagine 125, and aspartate 126. Residue asparagine 125 coordinates L-citrulline. The L-citrulline site is built by arginine 129, serine 177, serine 186, glutamate 262, and tyrosine 274.

The protein belongs to the argininosuccinate synthase family. Type 1 subfamily. In terms of assembly, homotetramer.

Its subcellular location is the cytoplasm. The catalysed reaction is L-citrulline + L-aspartate + ATP = 2-(N(omega)-L-arginino)succinate + AMP + diphosphate + H(+). Its pathway is amino-acid biosynthesis; L-arginine biosynthesis; L-arginine from L-ornithine and carbamoyl phosphate: step 2/3. The sequence is that of Argininosuccinate synthase from Synechococcus sp. (strain CC9605).